Reading from the N-terminus, the 75-residue chain is MAFLKKSLFLVLFLGLVSLSMCEEEKRENEVEEEQEDDEQSELRRSLWSSIKDMAAAAGRAALNAVNGIVNPGEQ.

The first 22 residues, 1–22 (MAFLKKSLFLVLFLGLVSLSMC), serve as a signal peptide directing secretion. Positions 23-45 (EEEKRENEVEEEQEDDEQSELRR) are excised as a propeptide. Proline amide is present on Pro72. A propeptide spanning residues 74-75 (EQ) is cleaved from the precursor.

Belongs to the frog skin active peptide (FSAP) family. Dermaseptin subfamily. As to expression, expressed by the skin glands.

It is found in the secreted. It localises to the target cell membrane. Its function is as follows. Antimicrobial peptide with activity against Gram-positive and Gram-negative bacteria and fungi. Has been tested against E.coli (MIC=47.50-128 uM), S.aureus (MIC=189.98-512 uM), K.pneumoniae (MIC&gt;189.98 uM) and C.albicans (MIC&gt;189.98 uM). Probably acts by disturbing membrane functions with its alpha-helical amphipathic structure. May penetrate bacterial membranes, but stay at the mammalian membrane surface. Shows a very weak hemolytic activity. In Agalychnis spurrelli (Gliding leaf frog), this protein is Dermaseptin-SP3.